Here is a 299-residue protein sequence, read N- to C-terminus: HTH-type transcriptional regulator ArgP (299 aa).

An HTH lysR-type domain is found at 4–60 (LDYKLLLALDAVMQEQNFERAAQRLHITQSAISQRIKQLEQQFAEPLLIRSQPLQAT). A DNA-binding region (H-T-H motif) is located at residues 21–40 (FERAAQRLHITQSAISQRIK).

Belongs to the LysR transcriptional regulatory family. In terms of assembly, homodimer.

In terms of biological role, controls the transcription of genes involved in arginine and lysine metabolism. The sequence is that of HTH-type transcriptional regulator ArgP from Aeromonas salmonicida.